Here is a 146-residue protein sequence, read N- to C-terminus: Hemoglobin subunit beta (146 aa).

The Globin domain occupies 2–146; it reads QWAAEEKQLI…VAHALARKYH (145 aa). The heme b site is built by H63 and H92.

It belongs to the globin family. In terms of assembly, heterotetramer of two alpha chains and two beta chains. As to expression, red blood cells.

In terms of biological role, involved in oxygen transport from the lung to the various peripheral tissues. This is Hemoglobin subunit beta (HBB) from Accipiter gentilis (Northern goshawk).